The sequence spans 158 residues: Transcriptional repressor NrdR (158 aa).

The segment at 1–20 (MRCPSCGSLDTQVKDSRPTE) is disordered. A zinc finger lies at 3-34 (CPSCGSLDTQVKDSRPTEDSSVIRRRRVCLTC). Residues 49–139 (LTVIKRNGRR…VYRNFREAKD (91 aa)) enclose the ATP-cone domain.

Belongs to the NrdR family. Requires Zn(2+) as cofactor.

In terms of biological role, negatively regulates transcription of bacterial ribonucleotide reductase nrd genes and operons by binding to NrdR-boxes. This is Transcriptional repressor NrdR from Afipia carboxidovorans (strain ATCC 49405 / DSM 1227 / KCTC 32145 / OM5) (Oligotropha carboxidovorans).